A 147-amino-acid chain; its full sequence is Ribosomal RNA large subunit methyltransferase H (147 aa).

S-adenosyl-L-methionine-binding positions include Leu-64, Gly-95, and 114–119 (LSSLTL).

This sequence belongs to the RNA methyltransferase RlmH family. In terms of assembly, homodimer.

The protein resides in the cytoplasm. The enzyme catalyses pseudouridine(1915) in 23S rRNA + S-adenosyl-L-methionine = N(3)-methylpseudouridine(1915) in 23S rRNA + S-adenosyl-L-homocysteine + H(+). Functionally, specifically methylates the pseudouridine at position 1915 (m3Psi1915) in 23S rRNA. The sequence is that of Ribosomal RNA large subunit methyltransferase H from Polynucleobacter asymbioticus (strain DSM 18221 / CIP 109841 / QLW-P1DMWA-1) (Polynucleobacter necessarius subsp. asymbioticus).